The following is a 106-amino-acid chain: Circadian clock oscillator protein KaiB (106 aa).

It belongs to the KaiB family. In terms of assembly, the KaiABC complex composition changes during the circadian cycle to control KaiC phosphorylation. Complexes KaiC(6), KaiA(2-4):KaiC(6), KaiB(6):KaiC(6) and KaiC(6):KaiB(6):KaiA(12) are among the most important forms, many form cooperatively. Undergoes a major conformational rearrangment; in the free state forms homotetramers as a dimer of dimers. When bound to the CI domain of KaiC switches to a monomeric thioredoxin-fold (KaiB(fs)). KaiB(fs) binds CikA, leading it to dephosphorylate phospho-RpaA.

Its function is as follows. Key component of the KaiABC oscillator complex, which constitutes the main circadian regulator in cyanobacteria. Complex composition changes during the circadian cycle to control KaiC phosphorylation. KaiA stimulates KaiC autophosphorylation, while KaiB sequesters KaiA, leading to KaiC autodephosphorylation. Phospho-Ser-431 KaiC accumulation triggers binding of KaiB to form the KaiB(6):KaiC(6) complex, leading to changes in output regulators CikA and SasA. KaiB switches to a thioredoxin-like fold (KaiB(fs)) when bound to KaiC. KaiB(6):KaiC(6) formation exposes a site for KaiA binding that sequesters KaiA from KaiC, making the KaiC(6):KaiB(6):KaiA(12) complex that results in KaiC autodephosphorylation. A metamorphic protein which reversibly switches between an inactive tetrameric fold and a rare, thioredoxin-like monomeric fold (KaiB(fs)). KaiB(fs) binds phospho-KaiC, KaiA and CikA. KaiA and CikA compete for binding to KaiB(fs), and KaiB(fs) and SasA compete for binding to KaiC, thus the clock oscillator and output signal pathway are tightly coupled. This Gloeothece citriformis (strain PCC 7424) (Cyanothece sp. (strain PCC 7424)) protein is Circadian clock oscillator protein KaiB.